A 169-amino-acid polypeptide reads, in one-letter code: Ribosome maturation factor RimP (169 aa).

The protein belongs to the RimP family.

The protein localises to the cytoplasm. In terms of biological role, required for maturation of 30S ribosomal subunits. This Koribacter versatilis (strain Ellin345) protein is Ribosome maturation factor RimP.